A 367-amino-acid polypeptide reads, in one-letter code: 5-amino-6-(D-ribitylamino)uracil--L-tyrosine 4-hydroxyphenyl transferase (367 aa).

Residues 56-290 form the Radical SAM core domain; it reads VTYVRNQNIN…MFAVARLFLD (235 aa). 3 residues coordinate [4Fe-4S] cluster: Cys-70, Cys-74, and Cys-77.

The protein belongs to the radical SAM superfamily. CofH family. In terms of assembly, consists of two subunits, CofG and CofH. The cofactor is [4Fe-4S] cluster.

It catalyses the reaction 5-amino-6-(D-ribitylamino)uracil + L-tyrosine + S-adenosyl-L-methionine = 5-amino-5-(4-hydroxybenzyl)-6-(D-ribitylimino)-5,6-dihydrouracil + 2-iminoacetate + 5'-deoxyadenosine + L-methionine + H(+). Its pathway is cofactor biosynthesis; coenzyme F0 biosynthesis. Its function is as follows. Catalyzes the radical-mediated synthesis of 5-amino-5-(4-hydroxybenzyl)-6-(D-ribitylimino)-5,6-dihydrouracil from 5-amino-6-(D-ribitylamino)uracil and L-tyrosine. In Methanoculleus marisnigri (strain ATCC 35101 / DSM 1498 / JR1), this protein is 5-amino-6-(D-ribitylamino)uracil--L-tyrosine 4-hydroxyphenyl transferase.